A 495-amino-acid chain; its full sequence is Protein FAM83F (495 aa).

A2 is subject to N-acetylalanine. A DUF1669 region spans residues A2–L294. Position 4 is a phosphoserine (S4). Disordered regions lie at residues Q341–A362 and P384–S495. A compositionally biased stretch (low complexity) spans P447 to S458. Residue S477 is modified to Phosphoserine.

It belongs to the FAM83 family. As to quaternary structure, directly interacts (via DUF1669) with CSNK1A1 and CSNK1A1L.

It is found in the cell membrane. This Mus musculus (Mouse) protein is Protein FAM83F (Fam83f).